The primary structure comprises 608 residues: Cytoplasmic dynein 1 intermediate chain 1 (608 aa).

2 stretches are compositionally biased toward basic and acidic residues: residues 1–13 (MSDK…ELER) and 20–60 (QIRE…RETE). Residues 1 to 106 (MSDKSDLKAE…SGDLGPLTRR (106 aa)) form a disordered region. Position 2 is an N-acetylserine (Ser2). The residue at position 50 (Ser50) is a Phosphoserine. A compositionally biased stretch (pro residues) spans 70 to 79 (PEPPLVPTPM). A compositionally biased stretch (low complexity) spans 80 to 90 (SPSSKSVSTPS). Ser83 is modified (phosphoserine). Phosphothreonine is present on Thr88. Ser90, Ser94, and Ser97 each carry phosphoserine. Residues 110–126 (KLGVSKITQVDFLPREV) form an interaction with DYNLT1 region. Residues 132–184 (ETQTPLATHQSEEDEDDEEMVEPKGDQDSEQENEDKKQEVKEAPPRELTEEEK) are disordered. The residue at position 139 (Thr139) is a Phosphothreonine. A phosphoserine mark is found at Ser142 and Ser160. A compositionally biased stretch (basic and acidic residues) spans 165–184 (EDKKQEVKEAPPRELTEEEK). 7 WD repeats span residues 248 to 297 (SKHR…TTPE), 301 to 341 (HCQS…RTPV), 350 to 391 (AHTH…TPQE), 400 to 440 (SKPV…AGIG), 445 to 490 (GHQG…PLYS), 493 to 533 (DNAD…EVPT), and 539 to 578 (EGAS…VPHN). Phosphoserine is present on Ser598.

The protein belongs to the dynein intermediate chain family. As to quaternary structure, homodimer. The cytoplasmic dynein 1 complex consists of two catalytic heavy chains (HCs) and a number of non-catalytic subunits presented by intermediate chains (ICs), light intermediate chains (LICs) and light chains (LCs); the composition seems to vary in respect to the IC, LIC and LC composition. The heavy chain homodimer serves as a scaffold for the probable homodimeric assembly of the respective non-catalytic subunits. The ICs and LICs bind directly to the HC dimer and the LCs assemble on the IC dimer. Interacts with DYNC1H1. Interacts with DYNLT1 and DYNLT3. Interacts with DCTN1. Interacts with MCRS1; the interaction is required for the proper distribution of centriolar satellites.

It is found in the cytoplasm. The protein localises to the chromosome. Its subcellular location is the centromere. The protein resides in the kinetochore. It localises to the cytoskeleton. It is found in the spindle pole. Functionally, acts as one of several non-catalytic accessory components of the cytoplasmic dynein 1 complex that are thought to be involved in linking dynein to cargos and to adapter proteins that regulate dynein function. Cytoplasmic dynein 1 acts as a motor for the intracellular retrograde motility of vesicles and organelles along microtubules. The intermediate chains mediate the binding of dynein to dynactin via its 150 kDa component (p150-glued) DCTN1. May play a role in mediating the interaction of cytoplasmic dynein with membranous organelles and kinetochores. The sequence is that of Cytoplasmic dynein 1 intermediate chain 1 (DYNC1I1) from Bos taurus (Bovine).